Reading from the N-terminus, the 24-residue chain is Myotoxin TmC4-47.2 (24 aa).

Residues 1-24 (KASSSAPKGWTHHGSRFTFHRGSM) form a disordered region. Residues 10–24 (WTHHGSRFTFHRGSM) are compositionally biased toward basic residues. The region spanning 13–24 (HGSRFTFHRGSM) is the C-type lectin domain.

As to expression, expressed by the venom gland.

Its subcellular location is the secreted. Its function is as follows. Able to depolarize frog skeletal muscle fibers, but has no effects on squid giant axons. Tetrodotoxin is able to partially antagonize the depolarization. Induces myonecrosis. This is Myotoxin TmC4-47.2 from Thalassophryne maculosa (Cano toadfish).